The following is a 278-amino-acid chain: Large ribosomal subunit protein uL2 (278 aa).

Disordered stretches follow at residues 1 to 20, 25 to 58, and 223 to 278; these read MGIR…SVSD, TRST…GGGH, and GVVM…GKKR. Residues 37–58 show a composition bias toward basic residues; it reads LHGKGGRNAHGRITTRHKGGGH. Residues 253-268 are compositionally biased toward basic and acidic residues; that stretch reads PEGRTRKPNKPSDKLI. Positions 269–278 are enriched in basic residues; sequence VRRRRTGKKR.

It belongs to the universal ribosomal protein uL2 family. In terms of assembly, part of the 50S ribosomal subunit. Forms a bridge to the 30S subunit in the 70S ribosome.

In terms of biological role, one of the primary rRNA binding proteins. Required for association of the 30S and 50S subunits to form the 70S ribosome, for tRNA binding and peptide bond formation. It has been suggested to have peptidyltransferase activity; this is somewhat controversial. Makes several contacts with the 16S rRNA in the 70S ribosome. The sequence is that of Large ribosomal subunit protein uL2 from Mycolicibacterium smegmatis (strain ATCC 700084 / mc(2)155) (Mycobacterium smegmatis).